Reading from the N-terminus, the 939-residue chain is cGMP-dependent 3',5'-cyclic phosphodiesterase (939 aa).

Gly-2 carries the N-myristoyl glycine lipid modification. Residues Cys-5 and Cys-11 are each lipidated (S-palmitoyl cysteine). Positions 16-38 (YPAARPAEPRGQQVFLKPDEPPP) are disordered. Ser-116 bears the Phosphoserine mark. Residues 197–217 (PEAVQNTSVDASEDQKDEKGY) form a disordered region. 2 GAF domains span residues 236-373 (ATSL…HYTG) and 408-547 (DVSV…GISI). 3',5'-cyclic GMP is bound by residues Ser-430, Asp-445, Ile-464, Tyr-487, and Thr-498. Positions 577–901 (SDDEYTKLLH…EHWTKVSHKF (325 aa)) constitute a PDEase domain. The active-site Proton donor is the His-655. Residues His-659, His-695, Asp-696, and Asp-807 each coordinate Zn(2+). Asp-696 is a binding site for Mg(2+).

It belongs to the cyclic nucleotide phosphodiesterase family. PDE2 subfamily. Homodimer. Zn(2+) serves as cofactor. The cofactor is Mg(2+). Expressed in brain and liver (at protein level).

Its subcellular location is the cytoplasm. It is found in the mitochondrion matrix. It localises to the mitochondrion inner membrane. The protein resides in the mitochondrion outer membrane. The protein localises to the cell membrane. The enzyme catalyses a nucleoside 3',5'-cyclic phosphate + H2O = a nucleoside 5'-phosphate + H(+). It catalyses the reaction 3',5'-cyclic GMP + H2O = GMP + H(+). It carries out the reaction 3',5'-cyclic AMP + H2O = AMP + H(+). Its activity is regulated as follows. The 3',5'-cyclic-AMP phosphodiesterase activity is stimulated by 3',5'-cyclic GMP. Specifically inhibited by Bay 60-7550. In terms of biological role, cGMP-activated cyclic nucleotide phosphodiesterase with a dual-specificity for the second messengers cAMP and cGMP, which are key regulators of many important physiological processes. Has a higher efficiency with cGMP compared to cAMP. Plays a role in cell growth and migration. Regulates mitochondrial cAMP levels and respiration. Involved in the regulation of mitochondria morphology/dynamics and apoptotic cell death via local modulation of cAMP/PKA signaling in the mitochondrion, including the monitoring of local cAMP levels at the outer mitochondrial membrane and of PKA-dependent phosphorylation of DNM1L. This Mus musculus (Mouse) protein is cGMP-dependent 3',5'-cyclic phosphodiesterase.